The following is a 444-amino-acid chain: Xaa-Pro dipeptidase (444 aa).

D247, D258, H340, E385, and E424 together coordinate Mn(2+).

The protein belongs to the peptidase M24B family. Bacterial-type prolidase subfamily. It depends on Mn(2+) as a cofactor.

It catalyses the reaction Xaa-L-Pro dipeptide + H2O = an L-alpha-amino acid + L-proline. In terms of biological role, splits dipeptides with a prolyl residue in the C-terminal position. This chain is Xaa-Pro dipeptidase, found in Proteus mirabilis (strain HI4320).